A 31-amino-acid polypeptide reads, in one-letter code: Photosystem II reaction center protein M (31 aa).

Residues 5 to 25 (ILAFIATALLILVPTAFLLII) traverse the membrane as a helical segment.

The protein belongs to the PsbM family. As to quaternary structure, PSII is composed of 1 copy each of membrane proteins PsbA, PsbB, PsbC, PsbD, PsbE, PsbF, PsbH, PsbI, PsbJ, PsbK, PsbL, PsbM, PsbT, PsbX, PsbY, PsbZ, Psb30/Ycf12, at least 3 peripheral proteins of the oxygen-evolving complex and a large number of cofactors. It forms dimeric complexes.

It is found in the plastid membrane. Functionally, one of the components of the core complex of photosystem II (PSII). PSII is a light-driven water:plastoquinone oxidoreductase that uses light energy to abstract electrons from H(2)O, generating O(2) and a proton gradient subsequently used for ATP formation. It consists of a core antenna complex that captures photons, and an electron transfer chain that converts photonic excitation into a charge separation. This subunit is found at the monomer-monomer interface. This is Photosystem II reaction center protein M from Cuscuta reflexa (Southern Asian dodder).